Consider the following 251-residue polypeptide: WUSCHEL-related homeobox 4 (251 aa).

2 disordered regions span residues 1–21 and 33–93; these read MKVH…DSTS and LAPK…RWNP. Over residues 11–21 the composition is skewed to low complexity; the sequence is SSSWDQHDSTS. Positions 71–83 are enriched in basic and acidic residues; the sequence is KFEHKRDPPHQLE. Positions 86–150 form a DNA-binding region, homeobox; WUS-type; sequence PGGTRWNPTQ…NHKARERQKQ (65 aa).

Belongs to the WUS homeobox family. In terms of tissue distribution, expressed in the vasculature of the whole plant (roots, hypocotyls, cotyledons and leaves), trichomes and stomata. Expresse in the developing vascular bundles of root and shoot lateral organs.

Its subcellular location is the nucleus. Promotes differentiation and/or maintenance of the vascular procambium, the initial cells of the developing vasculature. Part of the TDIF-TDR-WOX4 signaling pathway that plays a crucial role in the maintenance of the vascular meristem organization during secondary growth. Is required for promoting the proliferation of procambial/cambial stem cells but not for repressing their commitment to xylem differentiation in response to the TDIF signal. Acts redundantly with WOX14 downstream of the TDR/PXY receptor kinase to regulate procambial cell proliferation and differentiation in vascular tissue, independently of any role in vascular. Acts as a cambium regulator in the inflorescence stem. Is required for auxin-dependent cambium stimulation in the inflorescence stem. In Arabidopsis thaliana (Mouse-ear cress), this protein is WUSCHEL-related homeobox 4 (WOX4).